A 76-amino-acid chain; its full sequence is Kappa-actitoxin-Avd4g (76 aa).

An N-terminal signal peptide occupies residues Met1–Ala19. Positions Ala20–Phe31 are excised as a propeptide. Intrachain disulfides connect Cys37–Cys72, Cys39–Cys65, and Cys55–Cys73.

This sequence belongs to the sea anemone type 3 (BDS) potassium channel toxin family. As to expression, moderately expressed in the ectodermal tissue from the distal and proximal tentacles, body wall, and oral disk.

It is found in the secreted. The protein resides in the nematocyst. Blocks Kv3 voltage-gated potassium channels. Reduces blood pressure. This is Kappa-actitoxin-Avd4g from Anemonia viridis (Snakelocks anemone).